The primary structure comprises 125 residues: MRIAGVNLPLNKHAVIALTHVYGIGKTTAKTILQRTGIAPDRKISDLNDAEAHSIRELIAEEYKVEGQARGEQQLSIKRLMDVGCYRGLRHRRSLPVRGQNTQTNARTRKGKRKTVAGKKKAARK.

The segment at 91-125 (HRRSLPVRGQNTQTNARTRKGKRKTVAGKKKAARK) is disordered. The segment covering 107–125 (RTRKGKRKTVAGKKKAARK) has biased composition (basic residues).

Belongs to the universal ribosomal protein uS13 family. As to quaternary structure, part of the 30S ribosomal subunit. Forms a loose heterodimer with protein S19. Forms two bridges to the 50S subunit in the 70S ribosome.

Located at the top of the head of the 30S subunit, it contacts several helices of the 16S rRNA. In the 70S ribosome it contacts the 23S rRNA (bridge B1a) and protein L5 of the 50S subunit (bridge B1b), connecting the 2 subunits; these bridges are implicated in subunit movement. Contacts the tRNAs in the A and P-sites. The protein is Small ribosomal subunit protein uS13 of Chlorobium phaeovibrioides (strain DSM 265 / 1930) (Prosthecochloris vibrioformis (strain DSM 265)).